The following is a 393-amino-acid chain: Probable protein phosphatase 2C 72 (393 aa).

The 309-residue stretch at 49 to 357 (EFSMAVVQAN…DDITVVVVFF (309 aa)) folds into the PPM-type phosphatase domain. Mn(2+) is bound by residues aspartate 88 and glycine 89. Residues 147–167 (LAAVGSCCLVGVICAGNLYIA) traverse the membrane as a helical segment. Aspartate 289 and aspartate 348 together coordinate Mn(2+).

This sequence belongs to the PP2C family. The cofactor is Mg(2+). Mn(2+) serves as cofactor.

The protein localises to the membrane. The enzyme catalyses O-phospho-L-seryl-[protein] + H2O = L-seryl-[protein] + phosphate. It carries out the reaction O-phospho-L-threonyl-[protein] + H2O = L-threonyl-[protein] + phosphate. In Oryza sativa subsp. japonica (Rice), this protein is Probable protein phosphatase 2C 72.